Reading from the N-terminus, the 281-residue chain is MHKARLRGHCARAGKSVRLASSGMTRRDPLTNKVALVTASTDWIGFAVAQRLAQDGAHVVVSRRKQQNVDQAVATLQGEGLSMTGTVCHVGKMKDWERLVATAMKLHGVIDILSLSITNSKRGLFWFTLLQTAEEAWDRNLDINGKALALMIKAVVPEMEKRGGGSVGFLASVAAFRPLPGFSPYNVSKTALLGLNKTLAIELAPRNIRVNCLAPGLIKTSFSRMLWMDKEKEESMKETLRIRRLGEPEDSLGIVSFLCSEDASYLTGETVMVGGGTPSRL.

36-60 (LVTASTDWIGFAVAQRLAQDGAHVV) provides a ligand contact to NADP(+). A substrate-binding site is contributed by S172. The Proton acceptor role is filled by Y185. K189 contacts NADP(+). Residues 279–281 (SRL) carry the Peroxisomal targeting signal motif.

Belongs to the short-chain dehydrogenases/reductases (SDR) family.

In terms of biological role, putative oxidoreductase. This chain is Putative dehydrogenase/reductase SDR family member 4-like 1, found in Homo sapiens (Human).